The primary structure comprises 158 residues: 2-C-methyl-D-erythritol 2,4-cyclodiphosphate synthase (158 aa).

Residues aspartate 9 and histidine 11 each contribute to the a divalent metal cation site. 4-CDP-2-C-methyl-D-erythritol 2-phosphate is bound by residues 9 to 11 and 35 to 36; these read DVH and HS. Histidine 43 lines the a divalent metal cation pocket. Residues 57–59, 62–66, 101–107, 133–136, phenylalanine 140, and arginine 143 each bind 4-CDP-2-C-methyl-D-erythritol 2-phosphate; these read DIG, FPDTD, AQAPKMA, and TTTE.

Belongs to the IspF family. Homotrimer. The cofactor is a divalent metal cation.

It carries out the reaction 4-CDP-2-C-methyl-D-erythritol 2-phosphate = 2-C-methyl-D-erythritol 2,4-cyclic diphosphate + CMP. Its pathway is isoprenoid biosynthesis; isopentenyl diphosphate biosynthesis via DXP pathway; isopentenyl diphosphate from 1-deoxy-D-xylulose 5-phosphate: step 4/6. In terms of biological role, involved in the biosynthesis of isopentenyl diphosphate (IPP) and dimethylallyl diphosphate (DMAPP), two major building blocks of isoprenoid compounds. Catalyzes the conversion of 4-diphosphocytidyl-2-C-methyl-D-erythritol 2-phosphate (CDP-ME2P) to 2-C-methyl-D-erythritol 2,4-cyclodiphosphate (ME-CPP) with a corresponding release of cytidine 5-monophosphate (CMP). The protein is 2-C-methyl-D-erythritol 2,4-cyclodiphosphate synthase of Vibrio campbellii (strain ATCC BAA-1116).